Here is a 622-residue protein sequence, read N- to C-terminus: Dehydrogenase xptC (622 aa).

Positions 1–18 (MAKLSVILLFRSLLLCGA) are cleaved as a signal peptide. FAD-binding positions include 47–48 (VS), 68–69 (EA), and 123–126 (NAMI). N160, N173, N357, N364, and N480 each carry an N-linked (GlcNAc...) asparagine glycan. 598–599 (PM) serves as a coordination point for FAD.

Belongs to the GMC oxidoreductase family. In terms of assembly, homodimer. FAD serves as cofactor.

The protein operates within secondary metabolite biosynthesis. In terms of biological role, dehydrogenase involved in the conversion of monodictyphenone to the prenyl xanthones such as emericellin, shamixanthone and epishamixanthone. Monodictyphenone is first converted to variecoxanthone A via a paeciloxanthone intermediate by the consecutive actions of the FAD-dependent monooxygenase mdpD and the xanthone prenyltransferase xptB. XptB catalyzes regular O-prenylation at the hydroxy group of C-7 of the xanthone ring. Variecoxanthone A is further prenylated to emericellin by xptA before being reduced to shamixanthone and epishamixanthone by the dehydrogenase xptC. In Emericella nidulans (strain FGSC A4 / ATCC 38163 / CBS 112.46 / NRRL 194 / M139) (Aspergillus nidulans), this protein is Dehydrogenase xptC.